A 545-amino-acid chain; its full sequence is Solute carrier family 22 member 6 (545 aa).

Topologically, residues 1-9 (MAFNDLLKQ) are cytoplasmic. Residues 10-30 (VGGVGRFQLIQVTMVVAPLLL) form a helical membrane-spanning segment. Residues 31-129 (MASHNTLQNF…LVCSHRAFRQ (99 aa)) are Extracellular-facing. N-linked (GlcNAc...) asparagine glycans are attached at residues asparagine 39, asparagine 56, asparagine 86, asparagine 91, and asparagine 107. Residues 130–150 (LAQSLFMVGVLLGAMMFGYLA) traverse the membrane as a helical segment. Over 151–157 (DRLGRRK) the chain is Cytoplasmic. A helical membrane pass occupies residues 158–177 (VLILNYLQTAVSGTCAAYAP). Asparagine 178 carries N-linked (GlcNAc...) asparagine glycosylation. Residues 178–180 (NYT) lie on the Extracellular side of the membrane. Residues 181–201 (VYCIFRLLSGMSLASIAINCM) traverse the membrane as a helical segment. Residues 202 to 218 (TLNMEWMPIHTRAYVGT) are Cytoplasmic-facing. A helical membrane pass occupies residues 219-239 (LIGYVYSLGQFLLAGIAYAVP). Topologically, residues 240-242 (HWR) are extracellular. A helical transmembrane segment spans residues 243–263 (HLQLAVSVPFFVAFIYSWFFI). Over 264 to 331 (ESARWYSSSG…ELLRCPTLRR (68 aa)) the chain is Cytoplasmic. A helical transmembrane segment spans residues 332–352 (LFLCLSMLWFATSFAYYGLVM). Topologically, residues 353 to 362 (DLQGFGVSMY) are extracellular. A helical transmembrane segment spans residues 363-383 (LIQVIFGAVDLPAKFVCFLVI). Residues 384–389 (NSMGRR) lie on the Cytoplasmic side of the membrane. A helical transmembrane segment spans residues 390–410 (PAQLASLLLAGICILVNGIIP). The Extracellular portion of the chain corresponds to 411–419 (RGHTIIRTS). Residues 420–440 (LAVLGKGCLASSFNCIFLYTG) traverse the membrane as a helical segment. Over 441–450 (ELYPTMIRQT) the chain is Cytoplasmic. Residues 451–471 (GLGMGSTMARVGSIVSPLISM) form a helical membrane-spanning segment. Residues 472–478 (TAEFYPS) are Extracellular-facing. The helical transmembrane segment at 479 to 499 (IPLFIFGAVPVAASAVTALLP) threads the bilayer. Topologically, residues 500-545 (ETLGQPLPDTVQDLKSRSRGKQKQQQLEQQKQMIPLQVSTQEKNGL) are cytoplasmic. The segment at 515 to 545 (SRSRGKQKQQQLEQQKQMIPLQVSTQEKNGL) is disordered. Residues 522–531 (KQQQLEQQKQ) are compositionally biased toward low complexity. The segment covering 536–545 (QVSTQEKNGL) has biased composition (polar residues).

This sequence belongs to the major facilitator (TC 2.A.1) superfamily. Organic cation transporter (TC 2.A.1.19) family. Post-translationally, glycosylated. Glycosylation is necessary for proper targeting of the transporter to the plasma membrane. Expressed in kidney. In kidney, restricted to the proximal convoluted tubule (representing S1 and S2 segments). In brain, expressed in neurons of the cortex cerebri and hippocampus as well as in the ependymal cell layer of the choroid plexus.

It localises to the basolateral cell membrane. The protein resides in the basal cell membrane. It carries out the reaction (6R)-L-erythro-5,6,7,8-tetrahydrobiopterin(out) + a dicarboxylate(in) = (6R)-L-erythro-5,6,7,8-tetrahydrobiopterin(in) + a dicarboxylate(out). It catalyses the reaction L-erythro-7,8-dihydrobiopterin(out) + a dicarboxylate(in) = L-erythro-7,8-dihydrobiopterin(in) + a dicarboxylate(out). The enzyme catalyses L-sepiapterin(out) + a dicarboxylate(in) = L-sepiapterin(in) + a dicarboxylate(out). The catalysed reaction is prostaglandin F2alpha(out) + a dicarboxylate(in) = prostaglandin F2alpha(in) + a dicarboxylate(out). It carries out the reaction prostaglandin E2(out) + a dicarboxylate(in) = prostaglandin E2(in) + a dicarboxylate(out). It catalyses the reaction 3',5'-cyclic AMP(out) + a dicarboxylate(in) = 3',5'-cyclic AMP(in) + a dicarboxylate(out). The enzyme catalyses 3',5'-cyclic GMP(out) + a dicarboxylate(in) = 3',5'-cyclic GMP(in) + a dicarboxylate(out). The catalysed reaction is urate(out) + a dicarboxylate(in) = urate(in) + a dicarboxylate(out). It carries out the reaction kynurenate(out) + glutarate(in) = kynurenate(in) + glutarate(out). It catalyses the reaction (indol-3-yl)acetate(out) + a dicarboxylate(in) = (indol-3-yl)acetate(in) + a dicarboxylate(out). The enzyme catalyses indoxyl sulfate(out) + a dicarboxylate(in) = indoxyl sulfate(in) + a dicarboxylate(out). The catalysed reaction is N-benzoylglycine(out) + a dicarboxylate(in) = N-benzoylglycine(in) + a dicarboxylate(out). It carries out the reaction 3-carboxy-4-methyl-5-propyl-2-furanpropanoate(out) + a dicarboxylate(in) = 3-carboxy-4-methyl-5-propyl-2-furanpropanoate(in) + a dicarboxylate(out). Its function is as follows. Secondary active transporter that functions as a Na(+)-independent organic anion (OA)/dicarboxylate antiporter where the uptake of one molecule of OA into the cell is coupled with an efflux of one molecule of intracellular dicarboxylate such as 2-oxoglutarate or glutarate. Mediates the uptake of OA across the basolateral side of proximal tubule epithelial cells, thereby contributing to the renal elimination of endogenous OA from the systemic circulation into the urine. Functions as a biopterin transporters involved in the uptake and the secretion of coenzymes tetrahydrobiopterin (BH4), dihydrobiopterin (BH2) and sepiapterin to urine, thereby determining baseline levels of blood biopterins. Transports prostaglandin E2 (PGE2) and prostaglandin F2-alpha (PGF2-alpha) and may contribute to their renal excretion. Involved in the transport of neuroactive tryptophan metabolites kynurenate (KYNA) and xanthurenate (XA). May transport glutamate. Also involved in the disposition of uremic toxins and potentially toxic xenobiotics by the renal organic anion secretory pathway, helping reduce their undesired toxicological effects on the body. Uremic toxins include the indoxyl sulfate (IS), hippurate/N-benzoylglycine (HA), indole acetate (IA) and 3-carboxy-4- methyl-5-propyl-2-furanpropionate(CMPF) and urate. Xenobiotics include the mycotoxin ochratoxin (OTA). May also contribute to the transport of organic compounds in testes across the blood-testis-barrier. The protein is Solute carrier family 22 member 6 of Mus musculus (Mouse).